The primary structure comprises 109 residues: Ribonuclease P protein component (109 aa).

This sequence belongs to the RnpA family. In terms of assembly, consists of a catalytic RNA component (M1 or rnpB) and a protein subunit.

It carries out the reaction Endonucleolytic cleavage of RNA, removing 5'-extranucleotides from tRNA precursor.. RNaseP catalyzes the removal of the 5'-leader sequence from pre-tRNA to produce the mature 5'-terminus. It can also cleave other RNA substrates such as 4.5S RNA. The protein component plays an auxiliary but essential role in vivo by binding to the 5'-leader sequence and broadening the substrate specificity of the ribozyme. This is Ribonuclease P protein component from Nitratiruptor sp. (strain SB155-2).